The chain runs to 281 residues: Ribose-phosphate pyrophosphokinase (281 aa).

ATP contacts are provided by residues 33 to 35 (DGE) and 90 to 91 (RQ). The Mg(2+) site is built by histidine 123 and aspartate 161. Residue lysine 185 is part of the active site. Positions 187 and 211 each coordinate D-ribose 5-phosphate.

Belongs to the ribose-phosphate pyrophosphokinase family. Class III (archaeal) subfamily. Mg(2+) serves as cofactor.

The protein resides in the cytoplasm. The catalysed reaction is D-ribose 5-phosphate + ATP = 5-phospho-alpha-D-ribose 1-diphosphate + AMP + H(+). Its pathway is metabolic intermediate biosynthesis; 5-phospho-alpha-D-ribose 1-diphosphate biosynthesis; 5-phospho-alpha-D-ribose 1-diphosphate from D-ribose 5-phosphate (route I): step 1/1. In terms of biological role, involved in the biosynthesis of the central metabolite phospho-alpha-D-ribosyl-1-pyrophosphate (PRPP) via the transfer of pyrophosphoryl group from ATP to 1-hydroxyl of ribose-5-phosphate (Rib-5-P). The chain is Ribose-phosphate pyrophosphokinase from Halobacterium salinarum (strain ATCC 29341 / DSM 671 / R1).